The following is a 473-amino-acid chain: Xylosidase/arabinosidase (473 aa).

Asp-18 acts as the Proton acceptor in catalysis. The active-site Proton donor is the Glu-209.

The protein belongs to the glycosyl hydrolase 43 family. As to quaternary structure, homotetramer.

The catalysed reaction is Hydrolysis of (1-&gt;4)-beta-D-xylans, to remove successive D-xylose residues from the non-reducing termini.. It carries out the reaction Hydrolysis of terminal non-reducing alpha-L-arabinofuranoside residues in alpha-L-arabinosides.. This is Xylosidase/arabinosidase (xylA) from Thermoclostridium stercorarium (Clostridium stercorarium).